We begin with the raw amino-acid sequence, 543 residues long: Cytochrome P450 monooxygenase CYP1 (543 aa).

A helical membrane pass occupies residues serine 40 to serine 60. Residues asparagine 210 and asparagine 367 are each glycosylated (N-linked (GlcNAc...) asparagine). A heme-binding site is contributed by cysteine 478. A glycan (N-linked (GlcNAc...) asparagine) is linked at asparagine 517.

It belongs to the cytochrome P450 family. Heme is required as a cofactor.

The protein resides in the membrane. It participates in secondary metabolite biosynthesis. Cytochrome P450 monooxygenase; part of the gene cluster that mediates the biosynthesis of a tyrosine-derived cytochalasan acting as a fungal signal recognized by resistant rice plants and leads to avirulence in Pi33 resistant rice cultivars. The first step in the pathway is catalyzed by the hybrid PKS-NRPS ACE1, assisted by the enoyl reductase RAP1, that are responsible for fusion of the tyrosine precursor and the polyketide backbone. The polyketide synthase module (PKS) of ACE1 is responsible for the synthesis of the polyketide backbone and the downstream nonribosomal peptide synthetase (NRPS) amidates the carboxyl end of the polyketide with the tyrosine precursor. Because ACE1 lacks a designated enoylreductase (ER) domain, the required activity is provided the enoyl reductase RAP1. Reduction by the hydrolyase ORFZ, followed by dehydration and intra-molecular Diels-Alder cyclization by the Diels-Alderase ORF3 then yield the required isoindolone-fused macrocycle. A number of oxidative steps catalyzed by the tailoring enzymes identified within the cluster, including cytochrome P450 monooxygenases CYP1 to CYP4, the FAD-linked oxidoreductase OXR2 and the short-chain dehydrogenase/reductase OXR1, are further required to afford the final cytochalasans that confer avirulence and which have still to be identified. The monooxygenase CYP1 has been shown to be a site-selective C-18 hydroxylase whereas the function of CYP3 is the site-selective epoxidation of the C-6/C-7 olefin that is present in some intermediate compounds. Finally, SYN2 and RAP2 are not required for avirulence in Pi33 resistant rice cultivars. This is Cytochrome P450 monooxygenase CYP1 from Pyricularia oryzae (strain 70-15 / ATCC MYA-4617 / FGSC 8958) (Rice blast fungus).